The chain runs to 227 residues: 7-cyano-7-deazaguanine synthase (227 aa).

ATP is bound at residue 8-18 (FSGGQDSTTCL). Positions 187, 196, 199, and 202 each coordinate Zn(2+).

This sequence belongs to the QueC family. Zn(2+) serves as cofactor.

It carries out the reaction 7-carboxy-7-deazaguanine + NH4(+) + ATP = 7-cyano-7-deazaguanine + ADP + phosphate + H2O + H(+). It participates in purine metabolism; 7-cyano-7-deazaguanine biosynthesis. Catalyzes the ATP-dependent conversion of 7-carboxy-7-deazaguanine (CDG) to 7-cyano-7-deazaguanine (preQ(0)). This is 7-cyano-7-deazaguanine synthase from Aliivibrio salmonicida (strain LFI1238) (Vibrio salmonicida (strain LFI1238)).